The following is a 559-amino-acid chain: Urocanate hydratase (559 aa).

NAD(+) is bound by residues 54–55 (GG), Gln132, 178–180 (GMG), Glu198, Arg203, 244–245 (NA), 265–269 (QTSAH), 275–276 (YL), and Tyr324. Cys412 is a catalytic residue. Gly494 is a binding site for NAD(+).

Belongs to the urocanase family. It depends on NAD(+) as a cofactor.

The protein resides in the cytoplasm. It catalyses the reaction 4-imidazolone-5-propanoate = trans-urocanate + H2O. The protein operates within amino-acid degradation; L-histidine degradation into L-glutamate; N-formimidoyl-L-glutamate from L-histidine: step 2/3. Functionally, catalyzes the conversion of urocanate to 4-imidazolone-5-propionate. In Photorhabdus laumondii subsp. laumondii (strain DSM 15139 / CIP 105565 / TT01) (Photorhabdus luminescens subsp. laumondii), this protein is Urocanate hydratase.